The chain runs to 589 residues: Coronatine-insensitive protein homolog 2 (589 aa).

The region spanning 18–59 is the F-box domain; that stretch reads IPDVALGLVMGFVEDPWDRDAISLVCRHWCRVDALSRKHVTV. Positions 87, 352, 414, and 501 each coordinate jasmonate.

In terms of assembly, interacts with TIFY9/JAZ5, TIFY11C/JAZ11 and TIFY11D/JAZ12 in a coronatine-dependent manner.

Involved in jasmonate (JA) signaling. Required for jasmonate signaling in plant defense responses. Component of SCF(COI1) E3 ubiquitin ligase complexes, which may mediate the ubiquitination and subsequent proteasomal degradation of target proteins, including TIFY/JAZ family. This chain is Coronatine-insensitive protein homolog 2, found in Oryza sativa subsp. indica (Rice).